Consider the following 587-residue polypeptide: DELLA protein RGA (587 aa).

A disordered region spans residues 1-26 (MKRDHHQFQGRLSNHGTSSSSSSISK). The DELLA motif signature appears at 44-48 (DELLA). The short motif at 66–70 (LEQLE) is the LEXLE motif element. The VHYNP motif signature appears at 89–93 (VHYNP). Residues 152 to 181 (IDSSSSSNNQNKRLKSCSSPDSMVTSTSTG) are disordered. The span at 153 to 175 (DSSSSSNNQNKRLKSCSSPDSMV) shows a compositional bias: polar residues. In terms of domain architecture, GRAS spans 212-581 (VDSQENGVRL…RPLITTSAWK (370 aa)). Residues 219–273 (VRLVHALMACAEAIQQNNLTLAEALVKQIGCLAVSQAGAMRKVATYFAEALARRI) form a leucine repeat I (LRI) region. Residues 292–357 (QMHFYETCPY…GGPPTFRLTG (66 aa)) form a VHIID region. The VHIID motif lies at 323–327 (VHVID). The segment at 371–403 (EVGCKLAQLAEAIHVEFEYRGFVANSLADLDAS) is leucine repeat II (LRII). The interval 415–502 (VAVNSVFELH…EVYLGKQICN (88 aa)) is PFYRE. The short motif at 423 to 427 (LHKLL) is the LXXLL motif element. An SAW region spans residues 505 to 581 (ACEGPDRVER…RPLITTSAWK (77 aa)).

This sequence belongs to the GRAS family. DELLA subfamily. In terms of assembly, interacts directly with the GID2/SLY1 component of the SCF(GID2) complex. Interacts (via N-terminus) with GID1A, GID1B and GID1B (via N-terminus). Binds to bHLH transcription factors such as MYC2, PIF1, PIF4, PIF6 and SPT. Interacts with the BOI proteins BOI, BRG1, BRG2 and BRG3. Interacts with NFYC9. Interacts with TOPP4. Interacts with FLZ5. Binds to zinc finger proteins MGP/IDD3, IDD4, IDD5, BIB/IDD9 and JKD/IDD10 in the nucleus. Binds to and coactivates GAF1/IDD2 and ENY/IDD1. Binds to PDF2 and ATML1. In terms of processing, phosphorylated. Phosphorylation may increase the interaction with GID2. Gibberellin (GA) induces dephosphorylation of RGA by TOPP4 and subsequent degradation by the proteasomal pathway. Post-translationally, ubiquitinated. Upon GA application it is ubiquitinated by the SCF(GID2) complex, leading to its subsequent degradation. In terms of processing, O-fucosylated by SPY. O-fucosylation enhances RGA activity by promoting RGA binding to key transcription factors in brassinosteroid and light signaling pathways. Ubiquitously expressed. Expressed in roots, rosette leaves, bolting and mature stems, young and mature siliques, flower buds and influorescences.

The protein localises to the nucleus. Probable transcriptional regulator that acts as a repressor of the gibberellin (GA) signaling pathway. Probably acts by participating in large multiprotein complexes that repress transcription of GA-inducible genes. Positively regulates XERICO expression in seeds. Upon GA application, it is degraded by the proteasome, allowing the GA signaling pathway. Compared to other DELLA proteins, it is the most sensitive to GA application. No effect of the BOI proteins on its stability. Its activity is probably regulated by other phytohormones such as auxin and ethylene, attenuation of auxin transport delaying its GA-induced degradation. Involved in the regulation of seed dormancy and germination, including glucose-induced delay of seed germination. This chain is DELLA protein RGA, found in Arabidopsis thaliana (Mouse-ear cress).